A 408-amino-acid chain; its full sequence is Probable fructose-2,6-bisphosphatase C732.02c (408 aa).

Residue 16-24 participates in ATP binding; it reads GLPASGKTS. Asp-88 is an active-site residue. 127–132 contacts ATP; the sequence is NITDMC. Tyr-157 provides a ligand contact to beta-D-fructose 6-phosphate. Residue Arg-213 participates in beta-D-fructose 2,6-bisphosphate binding. Catalysis depends on His-214, which acts as the Tele-phosphohistidine intermediate. Positions 220 and 226 each coordinate beta-D-fructose 2,6-bisphosphate. Glu-285 acts as the Proton donor/acceptor in catalysis. The beta-D-fructose 2,6-bisphosphate site is built by Tyr-296, Arg-310, Lys-314, Tyr-325, Gln-351, and Arg-355. 307–310 provides a ligand contact to ATP; sequence AELR. Residues 351–355 and Tyr-387 each bind ATP; that span reads QAILR.

It in the C-terminal section; belongs to the phosphoglycerate mutase family.

The enzyme catalyses beta-D-fructose 2,6-bisphosphate + H2O = beta-D-fructose 6-phosphate + phosphate. In terms of biological role, this is predominantly if not solely a fructose-2,6-bisphosphatase. In Schizosaccharomyces pombe (strain 972 / ATCC 24843) (Fission yeast), this protein is Probable fructose-2,6-bisphosphatase C732.02c.